The primary structure comprises 91 residues: Bacterial microcompartment shell protein PduJ (91 aa).

Positions 4–88 (ALGLVETKGL…PHSDVEAILP (85 aa)) constitute a BMC domain.

The protein belongs to the bacterial microcompartments protein family. Homohexamer with a central pore of about 5.7 Angstroms in diameter. Interacts with PduP, which targets PduP to the BMC.

Its subcellular location is the bacterial microcompartment. It functions in the pathway polyol metabolism; 1,2-propanediol degradation. Functionally, one of the major shell proteins of the bacterial microcompartment (BMC) dedicated to 1,2-propanediol (1,2-PD) degradation. The isolated BMC shell component protein ratio for J:A:B':B:K:T:U is approximately 15:10:7:6:1:1:2. At least one of PduA or PduJ is required for BMC assembly; it must be encoded as the first gene in the pdu operon. Required for structural integrity of BMCs and to mitigate propionaldehyde toxicity, probably joins facets responsible for BMC closure. Edge residues (particularly Lys-25) are important for function and assembly of the BMC. 80% identical to PduA; although their pore regions appear structurally identical, unlike PduA plays no role in 1,2-PD diffusion into or out of the BMC shell. If pduJ is cloned in the chromosomal position of pduA it is able to complement a pduA deletion; it then has a functional pore as it assumes the transport functions of PduA. Overexpression of this protein leads to aberrant filaments that extend the length of the cell, cross the cleavage furrow and impair division. The filaments form nanotubes with a hollow center. Modeling suggests PduJ is probably the hub for binding multiple enzymes to the interior of the BMC; modeling suggests PduC, PduD, PduG and PduM are targeted to PduJ. The 1,2-propanediol (1,2-PD) degradation bacterial microcompartment (BMC) concentrates low levels of 1,2-PD catabolic enzymes, concentrates volatile reaction intermediates thus enhancing pathway flux and keeps the level of toxic, mutagenic propionaldehyde low. The polypeptide is Bacterial microcompartment shell protein PduJ (Salmonella typhimurium (strain LT2 / SGSC1412 / ATCC 700720)).